A 208-amino-acid polypeptide reads, in one-letter code: 3-demethoxyubiquinol 3-hydroxylase (208 aa).

Fe cation contacts are provided by E57, E87, H90, E139, E171, and H174.

Belongs to the COQ7 family. It depends on Fe cation as a cofactor.

It is found in the cell membrane. The catalysed reaction is a 5-methoxy-2-methyl-3-(all-trans-polyprenyl)benzene-1,4-diol + AH2 + O2 = a 3-demethylubiquinol + A + H2O. Its pathway is cofactor biosynthesis; ubiquinone biosynthesis. In terms of biological role, catalyzes the hydroxylation of 2-nonaprenyl-3-methyl-6-methoxy-1,4-benzoquinol during ubiquinone biosynthesis. In Burkholderia cenocepacia (strain ATCC BAA-245 / DSM 16553 / LMG 16656 / NCTC 13227 / J2315 / CF5610) (Burkholderia cepacia (strain J2315)), this protein is 3-demethoxyubiquinol 3-hydroxylase.